A 165-amino-acid chain; its full sequence is Hemolysin, heat labile (165 aa).

Cys-151 and Cys-161 are joined by a disulfide.

Belongs to the TDH hemolysin family. Homodimer.

Its function is as follows. Bacterial hemolysins are exotoxins that attack blood cell membranes and cause cell rupture by mechanisms not clearly defined. This Grimontia hollisae (Vibrio hollisae) protein is Hemolysin, heat labile.